The sequence spans 157 residues: Ribosome maturation factor RimP (157 aa).

The protein belongs to the RimP family.

The protein localises to the cytoplasm. Required for maturation of 30S ribosomal subunits. This chain is Ribosome maturation factor RimP, found in Bacillus pumilus (strain SAFR-032).